A 96-amino-acid polypeptide reads, in one-letter code: Exodeoxyribonuclease 7 small subunit (96 aa).

Basic and acidic residues predominate over residues 61-79 (ALTKDESQKTNKTGFRTES). Positions 61-96 (ALTKDESQKTNKTGFRTESKSTSQTSSDSVLEEDLF) are disordered. The span at 80-89 (KSTSQTSSDS) shows a compositional bias: low complexity.

It belongs to the XseB family. In terms of assembly, heterooligomer composed of large and small subunits.

The protein resides in the cytoplasm. The catalysed reaction is Exonucleolytic cleavage in either 5'- to 3'- or 3'- to 5'-direction to yield nucleoside 5'-phosphates.. Its function is as follows. Bidirectionally degrades single-stranded DNA into large acid-insoluble oligonucleotides, which are then degraded further into small acid-soluble oligonucleotides. The protein is Exodeoxyribonuclease 7 small subunit of Leptospira borgpetersenii serovar Hardjo-bovis (strain JB197).